The chain runs to 387 residues: MPHSIDMEDSSAIAERSKHAGLALEPEACFNLPQPTAEDRQDNWQTQYHSSEGAQGGSRKAQAADATTGNPTVDDASQQNGLLQQWVKQGYFMPAEHGSKAGNDVKHKYSPPKSDVWGVLVACTVITTWAALFYHSIFQIKLPSIEQLRSGNYNPSDFTSWPHVLLAFFSLEFLYTGLFITTHDAMHGTIAMRHRKLNDFLGSFAISLYAWFDYKMLHKKHWEHHNHTGKVGADPDFHRGNPSILPWFARFMMEYSSLWQFAKIAWWATGMQLLGAPFQNILMFMTAAPILSAFRLFYYGTYIPHHPEPGPASDKVEMDWTMSRTSTAPSLLSFLTCYHFDLHWEHHRWPYAPWWQLPVCRKLAGRTNPLHTEALQTAEPSRLEHGG.

Residues 1–78 are disordered; that stretch reads MPHSIDMEDS…GNPTVDDASQ (78 aa). Composition is skewed to polar residues over residues 43 to 53 and 65 to 78; these read NWQTQYHSSEG and DATT…DASQ.

It carries out the reaction echinenone + 2 AH2 + 2 O2 = canthaxanthin + 2 A + 3 H2O. It catalyses the reaction all-trans-beta-carotene + 2 AH2 + 2 O2 = echinenone + 2 A + 3 H2O. Its pathway is carotenoid biosynthesis. Functionally, involved in the biosynthesis of ketocarotenoids which are powerful anti-oxidative molecules. Catalyzes the conversion of beta-carotene to canthaxanthin via echinenone. The chain is Beta-carotene 4-ketolase from Protosiphon botryoides (Green alga).